The following is a 557-amino-acid chain: Beta-amylase 2, chloroplastic (557 aa).

A chloroplast-targeting transit peptide spans methionine 1–valine 38. Substrate is bound by residues aspartate 135, histidine 175, and aspartate 183. Residue glutamate 267 is the Proton donor of the active site. Positions 380, 385, and 427 each coordinate substrate. The Proton acceptor role is filled by glutamate 465. Substrate is bound by residues asparagine 466–alanine 467 and arginine 499.

Belongs to the glycosyl hydrolase 14 family.

The protein localises to the plastid. It is found in the chloroplast. It catalyses the reaction Hydrolysis of (1-&gt;4)-alpha-D-glucosidic linkages in polysaccharides so as to remove successive maltose units from the non-reducing ends of the chains.. Its function is as follows. Possesses beta-amylase activity in vitro. May be involved in cold resistance by mediating the accumulation of maltose upon freezing stress, thus contributing to the protection of membranes. The polypeptide is Beta-amylase 2, chloroplastic (Oryza sativa subsp. japonica (Rice)).